The primary structure comprises 398 residues: Energy-coupling factor transporter ATP-binding protein EcfA2 (398 aa).

An ABC transporter domain is found at 5-240 (IELKDLEYAY…KELVRRARLK (236 aa)). 38-45 (GSNGAGKS) serves as a coordination point for ATP.

This sequence belongs to the ABC transporter superfamily. Energy-coupling factor EcfA family. As to quaternary structure, forms a stable energy-coupling factor (ECF) transporter complex composed of 2 membrane-embedded substrate-binding proteins (S component), 2 ATP-binding proteins (A component) and 2 transmembrane proteins (T component).

It localises to the cell membrane. Its function is as follows. ATP-binding (A) component of a common energy-coupling factor (ECF) ABC-transporter complex. Unlike classic ABC transporters this ECF transporter provides the energy necessary to transport a number of different substrates. The chain is Energy-coupling factor transporter ATP-binding protein EcfA2 from Methanospirillum hungatei JF-1 (strain ATCC 27890 / DSM 864 / NBRC 100397 / JF-1).